A 67-amino-acid chain; its full sequence is Large ribosomal subunit protein uL29 (67 aa).

It belongs to the universal ribosomal protein uL29 family.

The sequence is that of Large ribosomal subunit protein uL29 from Alkaliphilus metalliredigens (strain QYMF).